The sequence spans 111 residues: Cytochrome c 2.1 (111 aa).

N-acetylserine is present on serine 2. 4 residues coordinate heme c: cysteine 20, cysteine 23, histidine 24, and methionine 85.

The protein belongs to the cytochrome c family. Post-translationally, binds 1 heme c group covalently per subunit.

It localises to the mitochondrion intermembrane space. Electron carrier protein. The oxidized form of the cytochrome c heme group can accept an electron from the heme group of the cytochrome c1 subunit of cytochrome reductase. Cytochrome c then transfers this electron to the cytochrome oxidase complex, the final protein carrier in the mitochondrial electron-transport chain. This Caenorhabditis elegans protein is Cytochrome c 2.1 (cyc-2.1).